Here is a 442-residue protein sequence, read N- to C-terminus: Putative aminohydrolase SsnA (442 aa).

Positions 62, 64, 227, and 312 each coordinate Zn(2+).

The protein belongs to the metallo-dependent hydrolases superfamily. ATZ/TRZ family.

This chain is Putative aminohydrolase SsnA (ssnA), found in Escherichia coli (strain K12).